Reading from the N-terminus, the 253-residue chain is 2-succinyl-6-hydroxy-2,4-cyclohexadiene-1-carboxylate synthase (253 aa).

Residues 11–147 (PWLVCLHGLF…PEALQDWYQQ (137 aa)) form the AB hydrolase-1 domain.

Belongs to the AB hydrolase superfamily. MenH family. As to quaternary structure, monomer.

The catalysed reaction is 5-enolpyruvoyl-6-hydroxy-2-succinyl-cyclohex-3-ene-1-carboxylate = (1R,6R)-6-hydroxy-2-succinyl-cyclohexa-2,4-diene-1-carboxylate + pyruvate. It participates in quinol/quinone metabolism; 1,4-dihydroxy-2-naphthoate biosynthesis; 1,4-dihydroxy-2-naphthoate from chorismate: step 3/7. It functions in the pathway quinol/quinone metabolism; menaquinone biosynthesis. Functionally, catalyzes a proton abstraction reaction that results in 2,5-elimination of pyruvate from 2-succinyl-5-enolpyruvyl-6-hydroxy-3-cyclohexene-1-carboxylate (SEPHCHC) and the formation of 2-succinyl-6-hydroxy-2,4-cyclohexadiene-1-carboxylate (SHCHC). This is 2-succinyl-6-hydroxy-2,4-cyclohexadiene-1-carboxylate synthase from Pectobacterium atrosepticum (strain SCRI 1043 / ATCC BAA-672) (Erwinia carotovora subsp. atroseptica).